A 122-amino-acid chain; its full sequence is Large ribosomal subunit protein bL17 (122 aa).

It belongs to the bacterial ribosomal protein bL17 family. Part of the 50S ribosomal subunit. Contacts protein L32.

The polypeptide is Large ribosomal subunit protein bL17 (Staphylococcus epidermidis (strain ATCC 35984 / DSM 28319 / BCRC 17069 / CCUG 31568 / BM 3577 / RP62A)).